Consider the following 216-residue polypeptide: Large ribosomal subunit protein uL3 (216 aa).

Position 153 is an N5-methylglutamine (Q153).

The protein belongs to the universal ribosomal protein uL3 family. In terms of assembly, part of the 50S ribosomal subunit. Forms a cluster with proteins L14 and L19. Post-translationally, methylated by PrmB.

Its function is as follows. One of the primary rRNA binding proteins, it binds directly near the 3'-end of the 23S rRNA, where it nucleates assembly of the 50S subunit. This Burkholderia multivorans (strain ATCC 17616 / 249) protein is Large ribosomal subunit protein uL3.